We begin with the raw amino-acid sequence, 467 residues long: Fumarate hydratase class II (467 aa).

Residues 98–100 (SGT), Arg126, 129–132 (HPND), 139–141 (SSN), and Thr187 each bind substrate. His188 (proton donor/acceptor) is an active-site residue. Ser318 is a catalytic residue. Residues Ser319 and 324 to 326 (KVN) contribute to the substrate site.

The protein belongs to the class-II fumarase/aspartase family. Fumarase subfamily. Homotetramer.

Its subcellular location is the cytoplasm. It carries out the reaction (S)-malate = fumarate + H2O. The protein operates within carbohydrate metabolism; tricarboxylic acid cycle; (S)-malate from fumarate: step 1/1. Functionally, involved in the TCA cycle. Catalyzes the stereospecific interconversion of fumarate to L-malate. The protein is Fumarate hydratase class II of Salmonella typhi.